An 847-amino-acid polypeptide reads, in one-letter code: Receptor-like protein 12 (847 aa).

Positions 1-27 are cleaved as a signal peptide; the sequence is MMIRSHRHWVFSSRIIIFLSLLVHSLA. The Extracellular segment spans residues 28–798; that stretch reads SSSPHFCRDD…LSEAEENMFN (771 aa). Residues N52, N66, N103, and N132 are each glycosylated (N-linked (GlcNAc...) asparagine). LRR repeat units lie at residues 109–133, 135–157, 158–181, 183–205, 206–229, 231–253, 254–277, 279–301, 302–325, 326–350, 351–374, 375–398, 400–422, 424–442, 443–466, 467–491, 492–514, 516–539, 541–562, 563–587, 589–613, 657–681, 682–704, 705–729, and 731–754; these read LQYL…LGNL, HLTL…IGNL, NQLR…LGNL, RLVN…IGDL, KQLR…LGNL, NLVH…IGNL, IELR…FANL, KLSI…MSIF, HNLE…LLLI, PSLE…TSSS, TKLQ…ISRL, LNLE…ISKL, NLLH…LWRL, TMVL…SQEE, ALIE…ICKL, SSLG…RNFS, GSIK…IFSK, TELV…LINC, ALEL…WLES, LPSL…HASI, FQSL…YFSN, RRDF…LGYL, KELR…FLAN, LTKL…LAAL, and FLSY…QFQR. N180 is a glycosylation site (N-linked (GlcNAc...) asparagine). N-linked (GlcNAc...) asparagine glycosylation is found at N210 and N228. N263, N276, and N289 each carry an N-linked (GlcNAc...) asparagine glycan. N346 carries N-linked (GlcNAc...) asparagine glycosylation. An N-linked (GlcNAc...) asparagine glycan is attached at N386. N437 carries N-linked (GlcNAc...) asparagine glycosylation. 2 N-linked (GlcNAc...) asparagine glycosylation sites follow: N489 and N503. An N-linked (GlcNAc...) asparagine glycan is attached at N601. N-linked (GlcNAc...) asparagine glycans are attached at residues N688 and N704. N736 carries an N-linked (GlcNAc...) asparagine glycan. The helical transmembrane segment at 799–819 threads the bilayer; it reads WVAAAIAYGPGVLCGLVIGHF. The Cytoplasmic segment spans residues 820–847; it reads YTSHNHEWFTEKFGRKQHKALTSVKCSL.

The protein belongs to the RLP family.

It localises to the cell membrane. Functionally, involved in the perception of CLV3 and CLV3-like peptides, that act as extracellular signals regulating meristems maintenance. In Arabidopsis thaliana (Mouse-ear cress), this protein is Receptor-like protein 12.